The sequence spans 238 residues: Uridylate kinase (238 aa).

12-15 (KLSG) serves as a coordination point for ATP. Residues 20–25 (GEKGFG) are involved in allosteric activation by GTP. Glycine 54 is a binding site for UMP. ATP contacts are provided by glycine 55 and arginine 59. UMP contacts are provided by residues aspartate 74 and 135–142 (TGSPYFST). Asparagine 163, tyrosine 169, and aspartate 172 together coordinate ATP.

The protein belongs to the UMP kinase family. Homohexamer.

The protein localises to the cytoplasm. The enzyme catalyses UMP + ATP = UDP + ADP. Its pathway is pyrimidine metabolism; CTP biosynthesis via de novo pathway; UDP from UMP (UMPK route): step 1/1. Allosterically activated by GTP. Inhibited by UTP. Catalyzes the reversible phosphorylation of UMP to UDP. The protein is Uridylate kinase of Lactococcus lactis subsp. lactis (strain IL1403) (Streptococcus lactis).